Here is a 179-residue protein sequence, read N- to C-terminus: Signal peptidase complex catalytic subunit SEC11A (179 aa).

The Cytoplasmic segment spans residues 1–16 (MLSLDFLDDVRRMNKR). A helical; Signal-anchor for type II membrane protein transmembrane segment spans residues 17 to 36 (QLYYQVLNFGMIVSSALMIW). At 37-179 (KGLMLITGSE…LGLFVLVHRE (143 aa)) the chain is on the lumenal side. Active-site charge relay system residues include Ser-56, His-96, and Asp-122. A C-terminal short (CTS) helix region spans residues 165 to 176 (AVLFLLGLFVLV).

It belongs to the peptidase S26B family. Component of the signal peptidase complex paralog A (SPC-A) composed of a catalytic subunit SEC11A and three accessory subunits SPCS1, SPCS2 and SPCS3. Within the complex, interacts with SPCS2 and SPCS3. The complex induces a local thinning of the ER membrane which is used to measure the length of the signal peptide (SP) h-region of protein substrates. This ensures the selectivity of the complex towards h-regions shorter than 18-20 amino acids.

The protein resides in the endoplasmic reticulum membrane. The enzyme catalyses Cleavage of hydrophobic, N-terminal signal or leader sequences from secreted and periplasmic proteins.. In terms of biological role, catalytic component of the signal peptidase complex (SPC) which catalyzes the cleavage of N-terminal signal sequences from nascent proteins as they are translocated into the lumen of the endoplasmic reticulum. Specifically cleaves N-terminal signal peptides that contain a hydrophobic alpha-helix (h-region) shorter than 18-20 amino acids. In Rattus norvegicus (Rat), this protein is Signal peptidase complex catalytic subunit SEC11A (Sec11a).